The chain runs to 93 residues: Alpha-defensin 26 (93 aa).

Residues 1 to 19 form the signal peptide; that stretch reads MKTLVLLSALFLLAFQVQA. A propeptide spanning residues 20–58 is cleaved from the precursor; it reads DPIQNTDEETNTEVQPQEEDQAVSVSFGNPEGSDLQEES. The disordered stretch occupies residues 24 to 55; sequence NTDEETNTEVQPQEEDQAVSVSFGNPEGSDLQ. A compositionally biased stretch (acidic residues) spans 25–40; the sequence is TDEETNTEVQPQEEDQ. Disulfide bonds link cysteine 64-cysteine 92, cysteine 66-cysteine 81, and cysteine 71-cysteine 91.

This sequence belongs to the alpha-defensin family.

It is found in the secreted. In terms of biological role, may have microbicidal activities. This is Alpha-defensin 26 (Defa26) from Mus musculus (Mouse).